A 208-amino-acid polypeptide reads, in one-letter code: FMN-dependent NADH:quinone oxidoreductase 2 (208 aa).

Belongs to the azoreductase type 1 family. As to quaternary structure, homodimer. FMN is required as a cofactor.

It catalyses the reaction 2 a quinone + NADH + H(+) = 2 a 1,4-benzosemiquinone + NAD(+). It carries out the reaction N,N-dimethyl-1,4-phenylenediamine + anthranilate + 2 NAD(+) = 2-(4-dimethylaminophenyl)diazenylbenzoate + 2 NADH + 2 H(+). In terms of biological role, quinone reductase that provides resistance to thiol-specific stress caused by electrophilic quinones. Also exhibits azoreductase activity. Catalyzes the reductive cleavage of the azo bond in aromatic azo compounds to the corresponding amines. In Bacillus cereus (strain ATCC 10987 / NRS 248), this protein is FMN-dependent NADH:quinone oxidoreductase 2.